The following is an 80-amino-acid chain: CLAVATA3/ESR (CLE)-related protein 14 (80 aa).

The first 26 residues, 1 to 26, serve as a signal peptide directing secretion; sequence MKVWSQRLSFLIVMIFILAGLHSSSA. Residues P71 and P74 each carry the hydroxyproline modification. Residue P74 is glycosylated (O-linked (Ara...) hydroxyproline).

This sequence belongs to the CLV3/ESR signal peptide family. In terms of assembly, interacts with the extracellular leucine-rich repeat region of CLV2 and PEPR2. Post-translationally, the O-glycosylation (arabinosylation) of the hydroxyproline Pro-74 enhances binding affinity of the CLE14p peptide for its receptor. As to expression, mostly expressed in roots, and, to a lower extent, in seedlings and leaves. Expressed in the primary root tip under Pi deficiency.

The protein localises to the secreted. It localises to the extracellular space. Extracellular signal peptide that regulates cell fate. Represses root apical meristem maintenance. Acts as an elicitor of the root meristem differentiation through the CLV2/CRN complex signaling pathway. Inhibits irreversibly root growth by reducing cell division rates in the root apical meristem. Regulates the transition of protophloem cells from proliferation to differentiation, thus impinging on postembryonic growth capacity of the root meristem; this signaling pathway requires CRN and CLV2. The polypeptide is CLAVATA3/ESR (CLE)-related protein 14 (Arabidopsis thaliana (Mouse-ear cress)).